The chain runs to 90 residues: DNA-binding protein HU-alpha (90 aa).

It belongs to the bacterial histone-like protein family. As to quaternary structure, heterodimer of an alpha and a beta chain.

Its function is as follows. Histone-like DNA-binding protein which is capable of wrapping DNA to stabilize it, and thus to prevent its denaturation under extreme environmental conditions. This chain is DNA-binding protein HU-alpha (hupA), found in Pseudomonas aeruginosa (strain ATCC 15692 / DSM 22644 / CIP 104116 / JCM 14847 / LMG 12228 / 1C / PRS 101 / PAO1).